The chain runs to 305 residues: DNA-directed RNA polymerase 35 kDa subunit (305 aa).

The protein belongs to the poxviridae DNA-directed RNA polymerase 35 kDa subunit family. The DNA-dependent RNA polymerase used for intermediate and late genes expression consists of eight subunits 147 kDa, 133 kDa, 35 kDa, 30 kDa, 22 kDa, 19 kDa, 18 kDa and 7 kDa totalling more than 500 kDa in mass. The same holoenzyme, with the addition of the transcription-specificity factor RAP94, is used for early gene expression.

The protein localises to the virion. It catalyses the reaction RNA(n) + a ribonucleoside 5'-triphosphate = RNA(n+1) + diphosphate. Its function is as follows. Part of the DNA-dependent RNA polymerase which catalyzes the transcription of viral DNA into RNA using the four ribonucleoside triphosphates as substrates. Responsible for the transcription of early, intermediate and late genes. DNA-dependent RNA polymerase associates with the early transcription factor (ETF), itself composed of D6 and A7, thereby allowing the early genes transcription. Late transcription, and probably also intermediate transcription, require newly synthesized RNA polymerase. This is DNA-directed RNA polymerase 35 kDa subunit (OPG156) from Homo sapiens (Human).